Reading from the N-terminus, the 250-residue chain is 5'/3'-nucleotidase SurE (250 aa).

Residues D9, D10, S40, and N93 each coordinate a divalent metal cation.

The protein belongs to the SurE nucleotidase family. It depends on a divalent metal cation as a cofactor.

The protein localises to the cytoplasm. The catalysed reaction is a ribonucleoside 5'-phosphate + H2O = a ribonucleoside + phosphate. It catalyses the reaction a ribonucleoside 3'-phosphate + H2O = a ribonucleoside + phosphate. The enzyme catalyses [phosphate](n) + H2O = [phosphate](n-1) + phosphate + H(+). Its function is as follows. Nucleotidase with a broad substrate specificity as it can dephosphorylate various ribo- and deoxyribonucleoside 5'-monophosphates and ribonucleoside 3'-monophosphates with highest affinity to 3'-AMP. Also hydrolyzes polyphosphate (exopolyphosphatase activity) with the preference for short-chain-length substrates (P20-25). Might be involved in the regulation of dNTP and NTP pools, and in the turnover of 3'-mononucleotides produced by numerous intracellular RNases (T1, T2, and F) during the degradation of various RNAs. This Yersinia enterocolitica serotype O:8 / biotype 1B (strain NCTC 13174 / 8081) protein is 5'/3'-nucleotidase SurE.